A 508-amino-acid chain; its full sequence is Asparagine--tRNA ligase (508 aa).

This sequence belongs to the class-II aminoacyl-tRNA synthetase family. As to quaternary structure, homodimer.

It is found in the cytoplasm. It catalyses the reaction tRNA(Asn) + L-asparagine + ATP = L-asparaginyl-tRNA(Asn) + AMP + diphosphate + H(+). The sequence is that of Asparagine--tRNA ligase from Streptococcus suis (strain 05ZYH33).